Reading from the N-terminus, the 180-residue chain is ATP-dependent protease subunit HslV (180 aa).

Thr8 is a catalytic residue. Na(+) is bound by residues Ala165, Cys168, and Thr171.

It belongs to the peptidase T1B family. HslV subfamily. A double ring-shaped homohexamer of HslV is capped on each side by a ring-shaped HslU homohexamer. The assembly of the HslU/HslV complex is dependent on binding of ATP.

It is found in the cytoplasm. It catalyses the reaction ATP-dependent cleavage of peptide bonds with broad specificity.. With respect to regulation, allosterically activated by HslU binding. In terms of biological role, protease subunit of a proteasome-like degradation complex believed to be a general protein degrading machinery. In Macrococcus caseolyticus (strain JCSC5402) (Macrococcoides caseolyticum), this protein is ATP-dependent protease subunit HslV.